The following is a 446-amino-acid chain: MREIVHIQAGQCGNQIGTKFWEVISDEHGIDPAGGYVGDSALQLERINVYYNESSSQKYVPRAVLVDLEPGTMDSVRSGPFGQLFRPDNFIFGQTGAGNNWAKGHYTEGAELVDSVLDVVRKECEHCDCLQGFQLTHSLGGGTGSGMGTLLISKIREEYPDRIMNTFSVMPSPKVSDTVVEPYNATLSVHQLVENTDETYCIDNEALYDICFRTLKLTTPTYGDLNHLVSATMSGVTTSLRFPGQLNADLRKLAVNMVPFPRLHFFMPGFAPLTARGSQQYRALTVPELTQQMFDAKNMMAACDPRHGRYLTVATVFRGPMSMKEVDEQMLAIQNKNSSYFVEWIPNNVKVAVCDIPPRGLKMASTFIGNSTAIQELFKRISEQFSAMFRRKAFLHWFTGEGMDEMEFTEAESNMNDLVSEYQQYQEATANDGEEAFEDDEEEINE.

The MREI motif signature appears at 1–4 (MREI). GTP-binding residues include Gln-11, Glu-69, Ser-138, Gly-142, Thr-143, Gly-144, Asn-204, and Asn-226. Glu-69 serves as a coordination point for Mg(2+). 5-glutamyl polyglutamate is present on Glu-438.

Belongs to the tubulin family. Dimer of alpha and beta chains. A typical microtubule is a hollow water-filled tube with an outer diameter of 25 nm and an inner diameter of 15 nM. Alpha-beta heterodimers associate head-to-tail to form protofilaments running lengthwise along the microtubule wall with the beta-tubulin subunit facing the microtubule plus end conferring a structural polarity. Microtubules usually have 13 protofilaments but different protofilament numbers can be found in some organisms and specialized cells. Mg(2+) serves as cofactor. In terms of processing, some glutamate residues at the C-terminus are polyglycylated, resulting in polyglycine chains on the gamma-carboxyl group. Glycylation is mainly limited to tubulin incorporated into axonemes (cilia and flagella) whereas glutamylation is prevalent in neuronal cells, centrioles, axonemes, and the mitotic spindle. Both modifications can coexist on the same protein on adjacent residues, and lowering polyglycylation levels increases polyglutamylation, and reciprocally. The precise function of polyglycylation is still unclear. Some glutamate residues at the C-terminus are polyglutamylated, resulting in polyglutamate chains on the gamma-carboxyl group. Polyglutamylation plays a key role in microtubule severing by spastin (SPAST). SPAST preferentially recognizes and acts on microtubules decorated with short polyglutamate tails: severing activity by SPAST increases as the number of glutamates per tubulin rises from one to eight, but decreases beyond this glutamylation threshold.

The protein resides in the cytoplasm. It is found in the cytoskeleton. Functionally, tubulin is the major constituent of microtubules, a cylinder consisting of laterally associated linear protofilaments composed of alpha- and beta-tubulin heterodimers. Microtubules grow by the addition of GTP-tubulin dimers to the microtubule end, where a stabilizing cap forms. Below the cap, tubulin dimers are in GDP-bound state, owing to GTPase activity of alpha-tubulin. The polypeptide is Tubulin beta-5 chain (Gallus gallus (Chicken)).